We begin with the raw amino-acid sequence, 678 residues long: Endopolyphosphatase (678 aa).

The Cytoplasmic portion of the chain corresponds to 1-2; sequence MR. The helical; Signal-anchor for type II membrane protein transmembrane segment at 3-23 threads the bilayer; that stretch reads SPLLASLFALALSIASSEAAI. The Vacuolar segment spans residues 24–678; sequence SSTEQVPLSG…ELMLVSTETD (655 aa). Positions 70–109 are disordered; the sequence is YKTGSTFDSGCHRKPKKDGKSEGKKATENERGNEDLDDKE. Basic and acidic residues predominate over residues 87–103; the sequence is DGKSEGKKATENERGNE. Residues N138, N369, and N447 are each glycosylated (N-linked (GlcNAc...) asparagine). Residues 504-547 are disordered; sequence KGSGGHRHDVPKGDCSLPSNEDKPHCTFKRKPRHYSKRSPSRTN. The span at 529-543 shows a compositional bias: basic residues; the sequence is CTFKRKPRHYSKRSP. 2 N-linked (GlcNAc...) asparagine glycosylation sites follow: N591 and N616.

Belongs to the endopolyphosphatase PPN1 family. Requires a divalent metal cation as cofactor. In terms of processing, processing by proteases in the vacuole may be required for activation.

Its subcellular location is the vacuole membrane. The enzyme catalyses [phosphate](n+1) + n H2O = (n+1) phosphate + n H(+). Catalyzes the hydrolysis of inorganic polyphosphate (polyP) chains of many hundreds of phosphate residues into shorter lengths. This Cryptococcus neoformans var. neoformans serotype D (strain JEC21 / ATCC MYA-565) (Filobasidiella neoformans) protein is Endopolyphosphatase (PPN1).